The following is a 443-amino-acid chain: Putative type II methyltransferase M.BsuMIIP (443 aa).

The 437-residue stretch at 4–440 (LRVMSLFSGI…QELIHTYVNK (437 aa)) folds into the SAM-dependent MTase C5-type domain. Residue Cys-78 is part of the active site.

Belongs to the class I-like SAM-binding methyltransferase superfamily. C5-methyltransferase family.

It catalyses the reaction a 2'-deoxycytidine in DNA + S-adenosyl-L-methionine = a 5-methyl-2'-deoxycytidine in DNA + S-adenosyl-L-homocysteine + H(+). Its function is as follows. A putative methylase, recognizes the double-stranded sequence 5'-GGCC-3', methylates C-?. There is no known cognate restriction enzyme. This Bacillus subtilis (strain 168) protein is Putative type II methyltransferase M.BsuMIIP (mtbP).